A 392-amino-acid chain; its full sequence is Galactokinase (392 aa).

Residue 37 to 40 (EHTD) participates in substrate binding. ATP contacts are provided by residues serine 71 and 128–134 (GSGLSSS). Serine 134 and glutamate 166 together coordinate Mg(2+). Aspartate 178 (proton acceptor) is an active-site residue. Tyrosine 228 serves as a coordination point for substrate.

The protein belongs to the GHMP kinase family. GalK subfamily.

Its subcellular location is the cytoplasm. It carries out the reaction alpha-D-galactose + ATP = alpha-D-galactose 1-phosphate + ADP + H(+). It participates in carbohydrate metabolism; galactose metabolism. In terms of biological role, catalyzes the transfer of the gamma-phosphate of ATP to D-galactose to form alpha-D-galactose-1-phosphate (Gal-1-P). The polypeptide is Galactokinase (Streptococcus pneumoniae (strain ATCC BAA-255 / R6)).